Consider the following 691-residue polypeptide: DNA ligase (691 aa).

NAD(+)-binding positions include 41–45, 90–91, and Glu130; these read DAEYD and SL. Lys132 (N6-AMP-lysine intermediate) is an active-site residue. NAD(+)-binding residues include Arg153, Glu190, Lys307, and Lys331. The Zn(2+) site is built by Cys425, Cys428, Cys443, and Cys449. The region spanning 610 to 691 is the BRCT domain; it reads APQGVLAGKT…LHQLLEGNTP (82 aa).

The protein belongs to the NAD-dependent DNA ligase family. LigA subfamily. Mg(2+) serves as cofactor. Mn(2+) is required as a cofactor.

The enzyme catalyses NAD(+) + (deoxyribonucleotide)n-3'-hydroxyl + 5'-phospho-(deoxyribonucleotide)m = (deoxyribonucleotide)n+m + AMP + beta-nicotinamide D-nucleotide.. In terms of biological role, DNA ligase that catalyzes the formation of phosphodiester linkages between 5'-phosphoryl and 3'-hydroxyl groups in double-stranded DNA using NAD as a coenzyme and as the energy source for the reaction. It is essential for DNA replication and repair of damaged DNA. The sequence is that of DNA ligase from Burkholderia lata (strain ATCC 17760 / DSM 23089 / LMG 22485 / NCIMB 9086 / R18194 / 383).